Consider the following 282-residue polypeptide: Putative 4-diphosphocytidyl-2-C-methyl-D-erythritol kinase (282 aa).

The active site involves Lys-9. ATP is bound at residue 93–103 (PVSAGLAGGST). Asp-135 is an active-site residue.

This sequence belongs to the GHMP kinase family. IspE subfamily.

The enzyme catalyses 4-CDP-2-C-methyl-D-erythritol + ATP = 4-CDP-2-C-methyl-D-erythritol 2-phosphate + ADP + H(+). Functionally, catalyzes the phosphorylation of the position 2 hydroxy group of 4-diphosphocytidyl-2C-methyl-D-erythritol. This chain is Putative 4-diphosphocytidyl-2-C-methyl-D-erythritol kinase, found in Staphylococcus saprophyticus subsp. saprophyticus (strain ATCC 15305 / DSM 20229 / NCIMB 8711 / NCTC 7292 / S-41).